The primary structure comprises 461 residues: MKEFDTITAVATPVGEGGISIIRISGDKSLDIVSSIFKGKNDRSLDDIKPYSMRYGFIIEKESKEIIDEVLVSYMKGPRSFTAEDTLEINCHGGVIPTKKILKELIKSGARLAEPGEFTKRAFLNGRIDLSQAEAVIDIIRSKTDLSMKSALKQAEGTLSKEINSIRNRMIKIIAHIEATVDYPEDDLEEITGQKIKVDLKEIINKIDNLISASEEGKILREGLNTVIVGKPNVGKSSLLNALINENKAIVTEIPGTTRDVIEEYINIDGIPIKIVDTAGIRETEDVVEKIGVEKSKEKIDEADLVIFMLDLSRKIDEEDIEIMDFIKNKKYIVLLNKLDLNKDLNEENHFIKELDSKYIIKTSVKNNSGLNELKECIKNLFFSGEIKSDELIVTNARHQEALIRSRESCIQAIETLSDEISIDLASIDIRNAWKYLGEITGDTLDENIIDKIFSEFCLGK.

Positions 23, 88, and 127 each coordinate (6S)-5-formyl-5,6,7,8-tetrahydrofolate. The region spanning glycine 223–phenylalanine 383 is the TrmE-type G domain. Asparagine 233 provides a ligand contact to K(+). Residues asparagine 233–serine 238, threonine 252–threonine 258, and aspartate 277–glycine 280 contribute to the GTP site. Residue serine 237 participates in Mg(2+) binding. K(+) is bound by residues threonine 252, isoleucine 254, and threonine 257. Residue threonine 258 coordinates Mg(2+). Lysine 461 lines the (6S)-5-formyl-5,6,7,8-tetrahydrofolate pocket.

This sequence belongs to the TRAFAC class TrmE-Era-EngA-EngB-Septin-like GTPase superfamily. TrmE GTPase family. In terms of assembly, homodimer. Heterotetramer of two MnmE and two MnmG subunits. K(+) serves as cofactor.

The protein resides in the cytoplasm. Exhibits a very high intrinsic GTPase hydrolysis rate. Involved in the addition of a carboxymethylaminomethyl (cmnm) group at the wobble position (U34) of certain tRNAs, forming tRNA-cmnm(5)s(2)U34. The chain is tRNA modification GTPase MnmE from Clostridium botulinum (strain Loch Maree / Type A3).